A 72-amino-acid chain; its full sequence is Protein RALF-like 12 (72 aa).

An N-terminal signal peptide occupies residues 1-17; that stretch reads MKAWVIGLLVICAVVIA. 2 disulfides stabilise this stretch: Cys34–Cys43 and Cys63–Cys69. The disordered stretch occupies residues 37–60; it reads PNPPPGCNPPGTEQKNPTPVNEYS.

This sequence belongs to the plant rapid alkalinization factor (RALF) family.

It is found in the secreted. Its function is as follows. Cell signaling peptide that may regulate plant stress, growth, and development. Mediates a rapid alkalinization of extracellular space by mediating a transient increase in the cytoplasmic Ca(2+) concentration leading to a calcium-dependent signaling events through a cell surface receptor and a concomitant activation of some intracellular mitogen-activated protein kinases. This is Protein RALF-like 12 (RALFL12) from Arabidopsis thaliana (Mouse-ear cress).